The following is a 932-amino-acid chain: 2-oxoglutarate dehydrogenase E1 component (932 aa).

Belongs to the alpha-ketoglutarate dehydrogenase family. As to quaternary structure, homodimer. Part of the 2-oxoglutarate dehydrogenase (OGDH) complex composed of E1 (2-oxoglutarate dehydrogenase), E2 (dihydrolipoamide succinyltransferase) and E3 (dihydrolipoamide dehydrogenase); the complex contains multiple copies of the three enzymatic components (E1, E2 and E3). It depends on thiamine diphosphate as a cofactor.

The enzyme catalyses N(6)-[(R)-lipoyl]-L-lysyl-[protein] + 2-oxoglutarate + H(+) = N(6)-[(R)-S(8)-succinyldihydrolipoyl]-L-lysyl-[protein] + CO2. In terms of biological role, E1 component of the 2-oxoglutarate dehydrogenase (OGDH) complex which catalyzes the decarboxylation of 2-oxoglutarate, the first step in the conversion of 2-oxoglutarate to succinyl-CoA and CO(2). The sequence is that of 2-oxoglutarate dehydrogenase E1 component from Staphylococcus aureus (strain MRSA252).